A 141-amino-acid chain; its full sequence is MVHSQLPVVALLRLLCALLLLPSATMIPGGLSPRSVTDPDVQEAAEFAVQEYNALSANAYYYKQLRIVEAQSQVVAGAKYYLTMELMKTKCAKTTGKPKVYKEIQNCELPPKAQQEKLTCRFQVWSRPWLQKIELTKMSCN.

The signal sequence occupies residues 1 to 26; sequence MVHSQLPVVALLRLLCALLLLPSATM. In terms of domain architecture, Cystatin spans 29-129; sequence GGLSPRSVTD…CRFQVWSRPW (101 aa). Positions 73 to 77 match the Secondary area of contact motif; the sequence is QVVAG. Intrachain disulfides connect Cys91-Cys107 and Cys120-Cys140.

It belongs to the cystatin family. As to expression, expressed at a low level by the venom gland (at protein level).

The protein localises to the secreted. Functionally, inhibits various C1 cysteine proteases including cathepsin L, papain and cathepsin B. This protein has no toxic activity and its function in the venom is unknown. It may play a role as a housekeeping or regulatory protein. This Notechis scutatus scutatus (Mainland tiger snake) protein is Cystatin.